The primary structure comprises 217 residues: Peptide methionine sulfoxide reductase MsrA (217 aa).

A disordered region spans residues 16-39 (EALKGGRHPVLESPQPHTVLGTPI). Cys56 is an active-site residue.

This sequence belongs to the MsrA Met sulfoxide reductase family.

It catalyses the reaction L-methionyl-[protein] + [thioredoxin]-disulfide + H2O = L-methionyl-(S)-S-oxide-[protein] + [thioredoxin]-dithiol. The catalysed reaction is [thioredoxin]-disulfide + L-methionine + H2O = L-methionine (S)-S-oxide + [thioredoxin]-dithiol. Its function is as follows. Has an important function as a repair enzyme for proteins that have been inactivated by oxidation. Catalyzes the reversible oxidation-reduction of methionine sulfoxide in proteins to methionine. This Corynebacterium efficiens (strain DSM 44549 / YS-314 / AJ 12310 / JCM 11189 / NBRC 100395) protein is Peptide methionine sulfoxide reductase MsrA.